The following is a 233-amino-acid chain: Adenosine 5'-phosphosulfate reductase (233 aa).

Positions 120, 121, 203, and 206 each coordinate [4Fe-4S] cluster. Cys-229 (nucleophile; cysteine thiosulfonate intermediate) is an active-site residue.

This sequence belongs to the PAPS reductase family. CysH subfamily. Requires [4Fe-4S] cluster as cofactor.

The protein resides in the cytoplasm. The enzyme catalyses [thioredoxin]-disulfide + sulfite + AMP + 2 H(+) = adenosine 5'-phosphosulfate + [thioredoxin]-dithiol. The protein operates within sulfur metabolism; hydrogen sulfide biosynthesis; sulfite from sulfate. In terms of biological role, catalyzes the formation of sulfite from adenosine 5'-phosphosulfate (APS) using thioredoxin as an electron donor. The protein is Adenosine 5'-phosphosulfate reductase of Bacillus velezensis (strain DSM 23117 / BGSC 10A6 / LMG 26770 / FZB42) (Bacillus amyloliquefaciens subsp. plantarum).